The following is a 498-amino-acid chain: WD repeat-containing protein 55 homolog (498 aa).

The tract at residues M1 to E131 is disordered. 2 stretches are compositionally biased toward acidic residues: residues D12–M23 and I31–L48. WD repeat units lie at residues K154–L193, V198–L237, A241–E279, E282–Q321, P324–D363, and Q408–E447.

The protein belongs to the WD repeat WDR55 family.

In Drosophila simulans (Fruit fly), this protein is WD repeat-containing protein 55 homolog.